A 186-amino-acid chain; its full sequence is Elongation factor P (186 aa).

This sequence belongs to the elongation factor P family.

The protein resides in the cytoplasm. It participates in protein biosynthesis; polypeptide chain elongation. Involved in peptide bond synthesis. Stimulates efficient translation and peptide-bond synthesis on native or reconstituted 70S ribosomes in vitro. Probably functions indirectly by altering the affinity of the ribosome for aminoacyl-tRNA, thus increasing their reactivity as acceptors for peptidyl transferase. This is Elongation factor P from Shewanella frigidimarina (strain NCIMB 400).